A 320-amino-acid chain; its full sequence is Ferrochelatase (320 aa).

Fe cation is bound by residues histidine 194 and glutamate 275.

The protein belongs to the ferrochelatase family. Monomer.

It is found in the cytoplasm. It catalyses the reaction heme b + 2 H(+) = protoporphyrin IX + Fe(2+). It participates in porphyrin-containing compound metabolism; protoheme biosynthesis; protoheme from protoporphyrin-IX: step 1/1. Catalyzes the ferrous insertion into protoporphyrin IX. This Salmonella agona (strain SL483) protein is Ferrochelatase.